Here is a 164-residue protein sequence, read N- to C-terminus: Protein LIGHT-DEPENDENT SHORT HYPOCOTYLS 8 (164 aa).

Positions R23–K150 constitute an ALOG domain. The Nuclear localization signal signature appears at K148–L152.

It belongs to the plant homeotic and developmental regulators ALOG protein family.

The protein localises to the nucleus. In terms of biological role, probable transcription regulator that acts as a developmental regulator by promoting cell growth in response to light. In Arabidopsis thaliana (Mouse-ear cress), this protein is Protein LIGHT-DEPENDENT SHORT HYPOCOTYLS 8 (LSH8).